The chain runs to 91 residues: uncharacterized protein (91 aa).

The helical transmembrane segment at 7 to 23 threads the bilayer; it reads IALVGVVVVLFGALRYQ.

The protein resides in the membrane. This is an uncharacterized protein from Haemophilus influenzae (strain ATCC 51907 / DSM 11121 / KW20 / Rd).